Consider the following 346-residue polypeptide: Ribonucleoside-diphosphate reductase subunit beta (346 aa).

Residues E89, E120, and H123 each contribute to the Fe cation site. The active site involves Y129. Residues E193, E227, and H230 each coordinate Fe cation.

The protein belongs to the ribonucleoside diphosphate reductase small chain family. In terms of assembly, tetramer of two alpha and two beta subunits. It depends on Fe cation as a cofactor.

The enzyme catalyses a 2'-deoxyribonucleoside 5'-diphosphate + [thioredoxin]-disulfide + H2O = a ribonucleoside 5'-diphosphate + [thioredoxin]-dithiol. Its function is as follows. Provides the precursors necessary for DNA synthesis. Catalyzes the biosynthesis of deoxyribonucleotides from the corresponding ribonucleotides. The chain is Ribonucleoside-diphosphate reductase subunit beta (nrdB) from Chlamydia trachomatis serovar D (strain ATCC VR-885 / DSM 19411 / UW-3/Cx).